A 475-amino-acid polypeptide reads, in one-letter code: Solute carrier family 46 member 2 (475 aa).

At 1–23 (MSPEVTCPRRGHLPRFHPRTWVE) the chain is on the cytoplasmic side. The helical transmembrane segment at 24-44 (PVVASSQVAASLYDAGLLLVV) threads the bilayer. Topologically, residues 45 to 78 (KASYGTGGSSNHSASPSPRGALEDQQQRAISNFY) are extracellular. N55 carries N-linked (GlcNAc...) asparagine glycosylation. Residues 79–99 (IIYNLVVGLSPLLSAYGLGWL) traverse the membrane as a helical segment. Topologically, residues 100 to 108 (SDRYHRKIS) are cytoplasmic. The chain crosses the membrane as a helical span at residues 109–129 (ICMSLLGFLLSRLGLLLKVLL). The Extracellular portion of the chain corresponds to 130-138 (DWPVEVLYG). The helical transmembrane segment at 139 to 159 (AAALNGLFGGFSAFWSGVMAL) threads the bilayer. The Cytoplasmic portion of the chain corresponds to 160 to 172 (GSLGSSEGRRSVR). A helical membrane pass occupies residues 173-193 (LILIDLMLGLAGFCGSMASGH). Over 194–205 (LFKQMAGHSGQG) the chain is Extracellular. The helical transmembrane segment at 206–226 (LILTACSVSCASFALLYSLLV) threads the bilayer. The Cytoplasmic segment spans residues 227–282 (LKVPESVAKPSQELPAVDTVSGTVGTYRTLDPDQLDQQYAVGHPPSPGKAKPHKTT). The chain crosses the membrane as a helical span at residues 283–303 (IALLFVGAIIYDLAVVGTVDV). Residues 304 to 320 (IPLFVLREPLGWNQVQV) are Extracellular-facing. Residues 321-341 (GYGMAAGYTIFITSFLGVLVF) form a helical membrane-spanning segment. Over 342–347 (SRCFRD) the chain is Cytoplasmic. A helical membrane pass occupies residues 348 to 368 (TTMIMIGMVSFGSGALLLAFV). At 369–370 (KE) the chain is on the extracellular side. Residues 371 to 391 (TYMFYIARAVMLFALIPVTTI) traverse the membrane as a helical segment. Topologically, residues 392–406 (RSAMSKLIKGSSYGK) are cytoplasmic. A helical transmembrane segment spans residues 407–427 (VFVILQLSLALTGVVTSTLYN). Residues 428–435 (KIYQLTMD) lie on the Extracellular side of the membrane. A helical membrane pass occupies residues 436-456 (MFVGSCFALSSFLSFLAIIPI). Topologically, residues 457-475 (SIVAYKQVPLSPYGDIIEK) are cytoplasmic.

Belongs to the major facilitator superfamily. SLC46A family. In terms of processing, glycosylated. Strongly expressed in the adult thymus. Expressed in spleen, lymph nodes, thymus, PBL, bone marrow and fetal liver. Expressed in monocytes and pre-dendridic cells.

It is found in the endosome membrane. The protein localises to the cell membrane. The enzyme catalyses N-acetyl-beta-D-glucosaminyl-(1-&gt;4)-1,6-anhydro-N-acetyl-beta-D-muramoyl-L-alanyl-gamma-D-glutamyl-meso-2,6-diaminopimeloyl-D-alanine(out) + n H(+)(out) = N-acetyl-beta-D-glucosaminyl-(1-&gt;4)-1,6-anhydro-N-acetyl-beta-D-muramoyl-L-alanyl-gamma-D-glutamyl-meso-2,6-diaminopimeloyl-D-alanine(in) + n H(+)(in). It carries out the reaction L-alanyl-gamma-D-glutamyl-meso-2,6-diaminopimelate(out) + n H(+)(out) = L-alanyl-gamma-D-glutamyl-meso-2,6-diaminopimelate(in) + n H(+)(in). The catalysed reaction is N-acetyl-D-muramoyl-L-alanyl-D-isoglutamine(out) + n H(+)(out) = N-acetyl-D-muramoyl-L-alanyl-D-isoglutamine(in) + n H(+)(in). It catalyses the reaction 2',3'-cGAMP(out) + n H(+)(out) = 2',3'-cGAMP(in) + n H(+)(in). The enzyme catalyses 3',3'-cGAMP(out) + n H(+)(out) = 3',3'-cGAMP(in) + n H(+)(in). Functionally, proton-coupled transporter that delivers pathogen-associated or danger-associated molecular patterns to cytosolic pattern recognition receptors as part of the innate immune response to microbes or tissue injury. Has selectivity toward muropeptides that contain the amino acid diaminopimelic acid (DAP-type peptidoglycan muropeptides) including Tri-DAP and tracheal toxin (TCT), common in Gram-negative bacteria and Gram-positive bacilli. In the context of immune recognition of skin microbiota, shuttles bacterial muropeptides across the endolysosomal membranes into the cytosol for recognition by NOD1, triggering MYD88-dependent secretion of IL1A and neutrophil recruitment in a pyroptosis-type inflammatory process. To a lesser extent and redundantly, transports muramyl dipeptides derived from most bacterial proteoglycans, eliciting NOD2 receptor activation and downstream inflammatory responses. Postulated to function as a dominant importer of cyclic GMP-AMP dinucleotides (cGAMPs) in monocyte and macrophage cell lineages. Selectively imports cGAMPs derived from pathogenic bacteria such as 3'3'-cGAMP thus providing for differential immune recognition of pathogenic versus commensal bacteria. During tumorigenesis may transport extracellular tumor-derived 2'3'-cGAMP across the plasma membrane of M1-polarized macrophages to activate the anti-tumoral stimulator of interferon genes (STING) pathway. The transport mechanism, its electrogenicity and stoichiometry remain to be elucidated. The polypeptide is Solute carrier family 46 member 2 (Homo sapiens (Human)).